The following is a 130-amino-acid chain: Large ribosomal subunit protein bL12 (130 aa).

It belongs to the bacterial ribosomal protein bL12 family. As to quaternary structure, homodimer. Part of the ribosomal stalk of the 50S ribosomal subunit. Forms a multimeric L10(L12)X complex, where L10 forms an elongated spine to which 2 to 4 L12 dimers bind in a sequential fashion. Binds GTP-bound translation factors.

In terms of biological role, forms part of the ribosomal stalk which helps the ribosome interact with GTP-bound translation factors. Is thus essential for accurate translation. The polypeptide is Large ribosomal subunit protein bL12 (Mycobacterium bovis (strain ATCC BAA-935 / AF2122/97)).